The primary structure comprises 548 residues: Probable malate:quinone oxidoreductase (548 aa).

A disordered region spans residues 522–548 (KPQAADSTPKAQLKPQPARKEVADIAL). Residues 539 to 548 (ARKEVADIAL) show a composition bias toward basic and acidic residues.

It belongs to the MQO family. The cofactor is FAD.

The catalysed reaction is (S)-malate + a quinone = a quinol + oxaloacetate. Its pathway is carbohydrate metabolism; tricarboxylic acid cycle; oxaloacetate from (S)-malate (quinone route): step 1/1. In Escherichia fergusonii (strain ATCC 35469 / DSM 13698 / CCUG 18766 / IAM 14443 / JCM 21226 / LMG 7866 / NBRC 102419 / NCTC 12128 / CDC 0568-73), this protein is Probable malate:quinone oxidoreductase.